Here is a 430-residue protein sequence, read N- to C-terminus: Signal recognition particle protein (430 aa).

GTP contacts are provided by residues 105-112 (GLQGSGKT), 187-191 (DTAGR), and 245-248 (TKLD).

Belongs to the GTP-binding SRP family. SRP54 subfamily. Part of the signal recognition particle protein translocation system, which is composed of SRP and FtsY.

Its subcellular location is the cytoplasm. It carries out the reaction GTP + H2O = GDP + phosphate + H(+). Functionally, involved in targeting and insertion of nascent membrane proteins into the cytoplasmic membrane. Binds to the hydrophobic signal sequence of the ribosome-nascent chain (RNC) as it emerges from the ribosomes. The SRP-RNC complex is then targeted to the cytoplasmic membrane where it interacts with the SRP receptor FtsY. In Thermus aquaticus, this protein is Signal recognition particle protein.